A 382-amino-acid chain; its full sequence is Galactokinase (382 aa).

A substrate-binding site is contributed by Glu-34–Asp-37. Gly-124–Ser-130 serves as a coordination point for ATP. Mg(2+)-binding residues include Ser-130 and Glu-162. Asp-174 functions as the Proton acceptor in the catalytic mechanism. Tyr-223 provides a ligand contact to substrate.

Belongs to the GHMP kinase family. GalK subfamily.

It localises to the cytoplasm. The catalysed reaction is alpha-D-galactose + ATP = alpha-D-galactose 1-phosphate + ADP + H(+). The protein operates within carbohydrate metabolism; galactose metabolism. Functionally, catalyzes the transfer of the gamma-phosphate of ATP to D-galactose to form alpha-D-galactose-1-phosphate (Gal-1-P). The sequence is that of Galactokinase from Escherichia coli O7:K1 (strain IAI39 / ExPEC).